The chain runs to 885 residues: Chromatin structure-remodeling complex protein RSC3 (885 aa).

The segment at residues 14 to 42 (CVQCRKRKIGCDRVKPICGNCMKHNKMDC) is a DNA-binding region (zn(2)-C6 fungal-type). Residues serine 95 and serine 236 each carry the phosphoserine modification.

In terms of assembly, forms a heteromer with RSC30. Interacts with LDB7 and NPL6. Component of the two forms of the RSC complex composed of at least either RSC1 or RSC2, and ARP7, ARP9, LDB7, NPL6, RSC3, RSC30, RSC4, RSC58, RSC6, RSC8, RSC9, SFH1, STH1, HTL1 and probably RTT102. The complexes interact with histone and histone variant components of centromeric chromatin. Component of a fungal-specific module (HTL1-LDB7-NPL6-RSC3-RSC30) within the RSC complex.

It localises to the nucleus. Functionally, component of the chromatin structure-remodeling complex (RSC), which is involved in transcription regulation and nucleosome positioning. RSC is responsible for the transfer of a histone octamer from a nucleosome core particle to naked DNA. The reaction requires ATP and involves an activated RSC-nucleosome intermediate. Remodeling reaction also involves DNA translocation, DNA twist and conformational change. As a reconfigurer of centromeric and flanking nucleosomes, RSC complex is required both for proper kinetochore function in chromosome segregation and, via a PKC1-dependent signaling pathway, for organization of the cellular cytoskeleton. This subunit is required for transcription of ribosomal protein genes and genes involved in the integrity of the cell wall, and also for proper metaphase progression. Together with HTL1, LDB7, NPL6, RSC30 components, defines a fungal-specific module within the RSC complex that plays a role in many cellular functions including the maintenance of cell wall integrity. This chain is Chromatin structure-remodeling complex protein RSC3 (RSC3), found in Saccharomyces cerevisiae (strain ATCC 204508 / S288c) (Baker's yeast).